We begin with the raw amino-acid sequence, 299 residues long: Putative beta-glucosidase 2 (299 aa).

An N-terminal signal peptide occupies residues 1 to 16; the sequence is MLHCITTIFLSISRMT. An a beta-D-glucoside-binding site is contributed by 49 to 50; sequence NE. The Proton donor role is filled by glutamate 50. A disulfide bridge links cysteine 69 with cysteine 72. Asparagine 71 and asparagine 76 each carry an N-linked (GlcNAc...) asparagine glycan. Position 189 (tyrosine 189) interacts with a beta-D-glucoside. Asparagine 222 carries an N-linked (GlcNAc...) asparagine glycan. Glutamate 255 contributes to the a beta-D-glucoside binding site. The Nucleophile role is filled by glutamate 255. N-linked (GlcNAc...) asparagine glycosylation occurs at asparagine 290.

Belongs to the glycosyl hydrolase 1 family.

The enzyme catalyses Hydrolysis of terminal, non-reducing beta-D-glucosyl residues with release of beta-D-glucose.. The polypeptide is Putative beta-glucosidase 2 (Arabidopsis thaliana (Mouse-ear cress)).